The primary structure comprises 530 residues: 5-aminolevulinate synthase, mitochondrial (530 aa).

A mitochondrion-targeting transit peptide spans 1–26; that stretch reads MFRPVLKVRPSFSYPYSIVSSRSVRL. Substrate is bound by residues R73, S186, and K205. Pyridoxal 5'-phosphate contacts are provided by S238, H266, and T316. Residue K319 is part of the active site. Position 319 is an N6-(pyridoxal phosphate)lysine (K319). Pyridoxal 5'-phosphate is bound by residues T348 and T349. Residue T434 participates in substrate binding.

It belongs to the class-II pyridoxal-phosphate-dependent aminotransferase family. As to quaternary structure, homodimer. Pyridoxal 5'-phosphate serves as cofactor.

It localises to the mitochondrion matrix. It catalyses the reaction succinyl-CoA + glycine + H(+) = 5-aminolevulinate + CO2 + CoA. The protein operates within porphyrin-containing compound metabolism; protoporphyrin-IX biosynthesis; 5-aminolevulinate from glycine: step 1/1. Catalyzes the synthesis of 5-aminolevulinate (ALA) from succinyl-CoA and glycine, the first and rate-limiting step in heme biosynthesis. The polypeptide is 5-aminolevulinate synthase, mitochondrial (HEM1) (Candida glabrata (strain ATCC 2001 / BCRC 20586 / JCM 3761 / NBRC 0622 / NRRL Y-65 / CBS 138) (Yeast)).